Reading from the N-terminus, the 356-residue chain is DNA-directed RNA polymerase subunit alpha (356 aa).

Residues 1-230 are alpha N-terminal domain (alpha-NTD); the sequence is MNLHRISSEP…DLLKPLLKVE (230 aa). An alpha C-terminal domain (alpha-CTD) region spans residues 267-356; the sequence is IDQPLLPADS…IRKSYGHILG (90 aa).

It belongs to the RNA polymerase alpha chain family. In terms of assembly, in plastids the minimal PEP RNA polymerase catalytic core is composed of four subunits: alpha, beta, beta', and beta''. When a (nuclear-encoded) sigma factor is associated with the core the holoenzyme is formed, which can initiate transcription.

It localises to the plastid. The protein resides in the chloroplast. It catalyses the reaction RNA(n) + a ribonucleoside 5'-triphosphate = RNA(n+1) + diphosphate. DNA-dependent RNA polymerase catalyzes the transcription of DNA into RNA using the four ribonucleoside triphosphates as substrates. The sequence is that of DNA-directed RNA polymerase subunit alpha from Zygnema circumcarinatum (Green alga).